We begin with the raw amino-acid sequence, 463 residues long: MNVPVEKNSSFSKELQQTLRSRHLLRTELSFSDEMIEWHIKNGYITAENSISINKRRYRCNRCGQTDQRYFSFYHSSGKNKLYCRSCVMMGRVSEEVPLYSWKEENESNWKSIKLTWDGKLSSGQQKAANVLIEAISKKEELLIWAVCGAGKTEMLFPGIESALNQGLRVCIATPRTDVVLELAPRLKAAFQGADISALYGGSDDKGRLSPLMISTTHQLLRYKDAIDVMIIDEVDAFPYSADQTLQFAVQKARKKNSTLVYLSATPPKELKRKALNGQLHSVRIPARHHRKPLPEPRFVWCGNWKKKLNRNKIPPAVKRWIEFHVKEGRPVFLFVPSVSILEKAAACFKGVHCRTASVHAEDKHRKEKVQQFRDGQLDLLITTTILERGVTVPKVQTGVLGAESSIFTESALVQIAGRTGRHKEYADGDVIYFHFGKTKSMLDARKHIKEMNELAAKVECTD.

Zn(2+) contacts are provided by Cys-60, Cys-63, Cys-84, and Cys-87. The region spanning 133–285 (IEAISKKEEL…LNGQLHSVRI (153 aa)) is the Helicase ATP-binding domain. ATP is bound at residue 146 to 153 (AVCGAGKT). The short motif at 233–236 (DEVD) is the DEAD box element. The Helicase C-terminal domain maps to 317 to 463 (AVKRWIEFHV…ELAAKVECTD (147 aa)).

It belongs to the DEAD box helicase family. In terms of assembly, monomer and dimer in solution. Interacts with DprA and ComFC; ComFA-ComFC form rings about 150 Angstroms in diameter with apparent 6-fold symmetry. Requires Zn(2+) as cofactor.

The protein resides in the cytoplasm. Involved in transformation (genetic competence for DNA uptake). Required for DNA uptake but not for DNA binding to cells. DNA uptake is energy dependent, this protein may provide the driving force for DNA uptake. Does not have helicase activity, translocates on single-stranded (ss)DNA in a 5'-3' direction in an ATP-dependent manner, but does not unwind double-stranded (ds)DNA. ATP hydrolysis causes the release of ssDNA from ComFA. A ssDNA-stimulated ATPase; dsDNA does not stimulate ATPase. ATP hydrolysis causes the release of ssDNA from ComFA. Binds ssDNA but only very poorly to dsDNA in the absence of ATP. Binding to ssDNA does not require free DNA ends. This is Competence protein ComFA from Bacillus subtilis (strain 168).